A 149-amino-acid chain; its full sequence is Large ribosomal subunit protein uL13 (149 aa).

This sequence belongs to the universal ribosomal protein uL13 family. Part of the 50S ribosomal subunit.

In terms of biological role, this protein is one of the early assembly proteins of the 50S ribosomal subunit, although it is not seen to bind rRNA by itself. It is important during the early stages of 50S assembly. The chain is Large ribosomal subunit protein uL13 from Chlorobium chlorochromatii (strain CaD3).